The primary structure comprises 89 residues: Small ribosomal subunit protein uS15 (89 aa).

The span at 1 to 13 shows a compositional bias: basic and acidic residues; sequence MTISKERKEEVIS. Residues 1 to 24 form a disordered region; that stretch reads MTISKERKEEVISEHGAAAGDTGS.

Belongs to the universal ribosomal protein uS15 family. As to quaternary structure, part of the 30S ribosomal subunit. Forms a bridge to the 50S subunit in the 70S ribosome, contacting the 23S rRNA.

In terms of biological role, one of the primary rRNA binding proteins, it binds directly to 16S rRNA where it helps nucleate assembly of the platform of the 30S subunit by binding and bridging several RNA helices of the 16S rRNA. Functionally, forms an intersubunit bridge (bridge B4) with the 23S rRNA of the 50S subunit in the ribosome. The protein is Small ribosomal subunit protein uS15 of Rhodopirellula baltica (strain DSM 10527 / NCIMB 13988 / SH1).